The following is a 364-amino-acid chain: UDP-N-acetylglucosamine--N-acetylmuramyl-(pentapeptide) pyrophosphoryl-undecaprenol N-acetylglucosamine transferase (364 aa).

Residues 10–12, asparagine 128, arginine 170, serine 199, isoleucine 250, and glutamine 295 each bind UDP-N-acetyl-alpha-D-glucosamine; that span reads TGG.

The protein belongs to the glycosyltransferase 28 family. MurG subfamily.

It is found in the cell inner membrane. It catalyses the reaction di-trans,octa-cis-undecaprenyl diphospho-N-acetyl-alpha-D-muramoyl-L-alanyl-D-glutamyl-meso-2,6-diaminopimeloyl-D-alanyl-D-alanine + UDP-N-acetyl-alpha-D-glucosamine = di-trans,octa-cis-undecaprenyl diphospho-[N-acetyl-alpha-D-glucosaminyl-(1-&gt;4)]-N-acetyl-alpha-D-muramoyl-L-alanyl-D-glutamyl-meso-2,6-diaminopimeloyl-D-alanyl-D-alanine + UDP + H(+). The protein operates within cell wall biogenesis; peptidoglycan biosynthesis. In terms of biological role, cell wall formation. Catalyzes the transfer of a GlcNAc subunit on undecaprenyl-pyrophosphoryl-MurNAc-pentapeptide (lipid intermediate I) to form undecaprenyl-pyrophosphoryl-MurNAc-(pentapeptide)GlcNAc (lipid intermediate II). In Chlorobaculum tepidum (strain ATCC 49652 / DSM 12025 / NBRC 103806 / TLS) (Chlorobium tepidum), this protein is UDP-N-acetylglucosamine--N-acetylmuramyl-(pentapeptide) pyrophosphoryl-undecaprenol N-acetylglucosamine transferase.